Here is a 424-residue protein sequence, read N- to C-terminus: Putative glutamate--cysteine ligase 2-3 (424 aa).

Disordered stretches follow at residues 1–20 (MQMA…PVLV) and 405–424 (GAAA…VRRP).

The protein belongs to the glutamate--cysteine ligase type 2 family. YbdK subfamily.

It carries out the reaction L-cysteine + L-glutamate + ATP = gamma-L-glutamyl-L-cysteine + ADP + phosphate + H(+). ATP-dependent carboxylate-amine ligase which exhibits weak glutamate--cysteine ligase activity. The polypeptide is Putative glutamate--cysteine ligase 2-3 (Paenarthrobacter aurescens (strain TC1)).